A 333-amino-acid chain; its full sequence is 4-hydroxy-3-methylbut-2-enyl diphosphate reductase (333 aa).

Cys-34 contributes to the [4Fe-4S] cluster binding site. His-63 and His-96 together coordinate (2E)-4-hydroxy-3-methylbut-2-enyl diphosphate. Dimethylallyl diphosphate-binding residues include His-63 and His-96. Isopentenyl diphosphate contacts are provided by His-63 and His-96. Cys-118 provides a ligand contact to [4Fe-4S] cluster. Position 146 (His-146) interacts with (2E)-4-hydroxy-3-methylbut-2-enyl diphosphate. Residue His-146 coordinates dimethylallyl diphosphate. His-146 lines the isopentenyl diphosphate pocket. The active-site Proton donor is Glu-148. Residue Thr-186 participates in (2E)-4-hydroxy-3-methylbut-2-enyl diphosphate binding. Position 216 (Cys-216) interacts with [4Fe-4S] cluster. Positions 244, 245, 246, and 289 each coordinate (2E)-4-hydroxy-3-methylbut-2-enyl diphosphate. Dimethylallyl diphosphate is bound by residues Ser-244, Ser-245, Asn-246, and Ser-289. Positions 244, 245, 246, and 289 each coordinate isopentenyl diphosphate.

The protein belongs to the IspH family. The cofactor is [4Fe-4S] cluster.

The enzyme catalyses isopentenyl diphosphate + 2 oxidized [2Fe-2S]-[ferredoxin] + H2O = (2E)-4-hydroxy-3-methylbut-2-enyl diphosphate + 2 reduced [2Fe-2S]-[ferredoxin] + 2 H(+). It catalyses the reaction dimethylallyl diphosphate + 2 oxidized [2Fe-2S]-[ferredoxin] + H2O = (2E)-4-hydroxy-3-methylbut-2-enyl diphosphate + 2 reduced [2Fe-2S]-[ferredoxin] + 2 H(+). The protein operates within isoprenoid biosynthesis; dimethylallyl diphosphate biosynthesis; dimethylallyl diphosphate from (2E)-4-hydroxy-3-methylbutenyl diphosphate: step 1/1. It participates in isoprenoid biosynthesis; isopentenyl diphosphate biosynthesis via DXP pathway; isopentenyl diphosphate from 1-deoxy-D-xylulose 5-phosphate: step 6/6. In terms of biological role, catalyzes the conversion of 1-hydroxy-2-methyl-2-(E)-butenyl 4-diphosphate (HMBPP) into a mixture of isopentenyl diphosphate (IPP) and dimethylallyl diphosphate (DMAPP). Acts in the terminal step of the DOXP/MEP pathway for isoprenoid precursor biosynthesis. The polypeptide is 4-hydroxy-3-methylbut-2-enyl diphosphate reductase (Mycobacterium sp. (strain KMS)).